Reading from the N-terminus, the 84-residue chain is Mitochondrial import inner membrane translocase subunit Tim9 (84 aa).

The Twin CX3C motif signature appears at 28–52; it reads CFMDCVKDFTTREVKPEETTCSESC. Intrachain disulfides connect cysteine 28/cysteine 52 and cysteine 32/cysteine 48.

This sequence belongs to the small Tim family. As to quaternary structure, heterohexamer; composed of 3 copies of TIMM9 and 3 copies of TIMM10/TIM10A, named soluble 70 kDa complex. The complex forms a 6-bladed alpha-propeller structure and associates with the TIMM22 component of the TIM22 complex. Interacts with multi-pass transmembrane proteins in transit.

The protein resides in the mitochondrion inner membrane. In terms of biological role, mitochondrial intermembrane chaperone that participates in the import and insertion of multi-pass transmembrane proteins into the mitochondrial inner membrane. May also be required for the transfer of beta-barrel precursors from the TOM complex to the sorting and assembly machinery (SAM complex) of the outer membrane. Acts as a chaperone-like protein that protects the hydrophobic precursors from aggregation and guide them through the mitochondrial intermembrane space. The protein is Mitochondrial import inner membrane translocase subunit Tim9 (timm9) of Danio rerio (Zebrafish).